A 32-amino-acid chain; its full sequence is METITYVFIFACIIALFFFAIFFREPPRITKK.

M1 is subject to N-formylmethionine. Residues 1 to 2 (ME) lie on the Lumenal side of the membrane. Residues 3-23 (TITYVFIFACIIALFFFAIFF) form a helical membrane-spanning segment. Residues 24 to 32 (REPPRITKK) lie on the Cytoplasmic side of the membrane.

This sequence belongs to the PsbT family. In terms of assembly, PSII is composed of 1 copy each of membrane proteins PsbA, PsbB, PsbC, PsbD, PsbE, PsbF, PsbH, PsbI, PsbJ, PsbK, PsbL, PsbM, PsbT, PsbX, PsbY, PsbZ, Psb30/Ycf12, PsbO, CyanoQ (PsbQ), PsbU, PsbV and a large number of cofactors. It forms dimeric complexes. Part of a photosystem II (PSII) assembly intermediate complex PSII-I; crystallized from a strain deleted of psbJ, it forms monomeric PSII before addition of the oxygen evolving complex. PSII-I includes 3 assembly factors not found in mature PSII (Psb27, Psb28 and Psb34). It depends on PSII binds multiple chlorophylls, carotenoids and specific lipids. as a cofactor.

It is found in the cellular thylakoid membrane. Found at the monomer-monomer interface of the photosystem II (PS II) dimer, plays a role in assembly and dimerization of PSII. PSII is a light-driven water plastoquinone oxidoreductase, using light energy to abstract electrons from H(2)O, generating a proton gradient subsequently used for ATP formation. The chain is Photosystem II reaction center protein T from Thermosynechococcus vestitus (strain NIES-2133 / IAM M-273 / BP-1).